A 735-amino-acid polypeptide reads, in one-letter code: Cyclic nucleotide-gated channel cone photoreceptor subunit alpha (735 aa).

Residues 1–214 (MAKINTQHSY…PSSNMYYNWL (214 aa)) lie on the Cytoplasmic side of the membrane. The tract at residues 142-191 (VNFSNNTNEDKKEEKKEVKEEKKEEKKEEKKEEKKDDKKDDKKDDKKDDK) is disordered. Residues 149–191 (NEDKKEEKKEVKEEKKEEKKEEKKEEKKDDKKDDKKDDKKDDK) are compositionally biased toward basic and acidic residues. Residues 215–236 (TIIAAPVFYNWCMLICRACFDE) form a helical membrane-spanning segment. The Extracellular segment spans residues 237-246 (LQIDHIKLWL). The chain crosses the membrane as a helical span at residues 247-267 (FLDYCSDIIYVFDMFVRFRTG). At 268 to 292 (FLEQGLLVKDEKKLRDHYTQTVQFK) the chain is on the cytoplasmic side. The chain crosses the membrane as a helical span at residues 293–311 (LDVLSLLPTDLAYLKLGLN). Over 312–316 (YPELR) the chain is Extracellular. A helical membrane pass occupies residues 317–335 (FNRLLRIARLFEFFDRTET). Topologically, residues 336 to 342 (RTNYPNM) are cytoplasmic. A helical membrane pass occupies residues 343-366 (FRIGNLVLYILIIIHWNACIYFAI). Topologically, residues 367–389 (SKVIGFGTDSWVYPNVSIPEYGR) are extracellular. The next 2 membrane-spanning stretches (helical) occupy residues 390-424 (LSRK…LFVV) and 425-449 (IDFL…SNMN). The Cytoplasmic portion of the chain corresponds to 450-735 (ASRAEFQAKV…PEKPEEQKKD (286 aa)). 3',5'-cyclic GMP contacts are provided by residues 532 to 654 (LLIE…DNLI), glutamate 591, and arginine 606. The segment at 715–735 (GSGSLSVGEPEPEKPEEQKKD) is disordered. Residues 725-735 (EPEKPEEQKKD) are compositionally biased toward basic and acidic residues.

The protein belongs to the cyclic nucleotide-gated cation channel (TC 1.A.1.5) family.

It localises to the membrane. Visual signal transduction is mediated by a G-protein coupled cascade using cGMP as second messenger. This protein can be activated by cyclic GMP which leads to an opening of the cation channel and thereby causing a depolarization of cone photoreceptors. The sequence is that of Cyclic nucleotide-gated channel cone photoreceptor subunit alpha from Gallus gallus (Chicken).